The primary structure comprises 421 residues: Medium-chain specific acyl-CoA dehydrogenase, mitochondrial (421 aa).

The transit peptide at 1 to 25 (MIALFRRSCGVLRSLSHFDWRSQHT) directs the protein to the mitochondrion. Lys69 bears the N6-acetyllysine; alternate mark. N6-succinyllysine; alternate is present on Lys69. Residue Lys79 is modified to N6-acetyllysine. An FAD-binding site is contributed by 158-167 (YCVTEPVAGS). Ser167 contacts octanoyl-CoA. Lys179 is modified (N6-succinyllysine). An FAD-binding site is contributed by 191–193 (WIT). Residue Lys212 is modified to N6-acetyllysine; alternate. N6-succinyllysine; alternate is present on Lys212. Ser216 is a binding site for octanoyl-CoA. N6-acetyllysine; alternate is present on residues Lys217, Lys259, and Lys271. An N6-succinyllysine; alternate mark is found at Lys217, Lys259, and Lys271. Position 278 (Asp278) interacts with octanoyl-CoA. At Lys279 the chain carries N6-acetyllysine. Arg281 lines the octanoyl-CoA pocket. Lys301 carries the N6-acetyllysine modification. FAD-binding positions include 306-308 (RKT) and 316-317 (HQ). Octanoyl-CoA-binding residues include Arg349 and Thr351. A Phosphothreonine modification is found at Thr351. An FAD-binding site is contributed by 374 to 378 (QIFGG). An octanoyl-CoA-binding site is contributed by Glu401. The active-site Proton acceptor is the Glu401. Position 402–405 (402–405 (GTAQ)) interacts with FAD.

It belongs to the acyl-CoA dehydrogenase family. As to quaternary structure, homotetramer. Interacts with the heterodimeric electron transfer flavoprotein ETF. Requires FAD as cofactor. Acetylated. Could occur at proximity of the cofactor-binding sites and reduce the catalytic activity. Could be deacetylated by SIRT3.

It is found in the mitochondrion matrix. The catalysed reaction is a medium-chain 2,3-saturated fatty acyl-CoA + oxidized [electron-transfer flavoprotein] + H(+) = a medium-chain (2E)-enoyl-CoA + reduced [electron-transfer flavoprotein]. It catalyses the reaction pentanoyl-CoA + oxidized [electron-transfer flavoprotein] + H(+) = (2E)-pentenoyl-CoA + reduced [electron-transfer flavoprotein]. It carries out the reaction hexanoyl-CoA + oxidized [electron-transfer flavoprotein] + H(+) = (2E)-hexenoyl-CoA + reduced [electron-transfer flavoprotein]. The enzyme catalyses octanoyl-CoA + oxidized [electron-transfer flavoprotein] + H(+) = (2E)-octenoyl-CoA + reduced [electron-transfer flavoprotein]. The catalysed reaction is decanoyl-CoA + oxidized [electron-transfer flavoprotein] + H(+) = (2E)-decenoyl-CoA + reduced [electron-transfer flavoprotein]. It catalyses the reaction dodecanoyl-CoA + oxidized [electron-transfer flavoprotein] + H(+) = (2E)-dodecenoyl-CoA + reduced [electron-transfer flavoprotein]. It carries out the reaction tetradecanoyl-CoA + oxidized [electron-transfer flavoprotein] + H(+) = (2E)-tetradecenoyl-CoA + reduced [electron-transfer flavoprotein]. The enzyme catalyses oxidized [electron-transfer flavoprotein] + hexadecanoyl-CoA + H(+) = (2E)-hexadecenoyl-CoA + reduced [electron-transfer flavoprotein]. The protein operates within lipid metabolism; mitochondrial fatty acid beta-oxidation. Medium-chain specific acyl-CoA dehydrogenase is one of the acyl-CoA dehydrogenases that catalyze the first step of mitochondrial fatty acid beta-oxidation, an aerobic process breaking down fatty acids into acetyl-CoA and allowing the production of energy from fats. The first step of fatty acid beta-oxidation consists in the removal of one hydrogen from C-2 and C-3 of the straight-chain fatty acyl-CoA thioester, resulting in the formation of trans-2-enoyl-CoA. Electron transfer flavoprotein (ETF) is the electron acceptor that transfers electrons to the main mitochondrial respiratory chain via ETF-ubiquinone oxidoreductase (ETF dehydrogenase). Among the different mitochondrial acyl-CoA dehydrogenases, medium-chain specific acyl-CoA dehydrogenase acts specifically on acyl-CoAs with saturated 6 to 12 carbons long primary chains. The sequence is that of Medium-chain specific acyl-CoA dehydrogenase, mitochondrial from Bos taurus (Bovine).